The primary structure comprises 135 residues: Large ribosomal subunit protein uL16c (135 aa).

The protein belongs to the universal ribosomal protein uL16 family. As to quaternary structure, part of the 50S ribosomal subunit.

It is found in the plastid. The protein resides in the chloroplast. In Lepidium virginicum (Virginia pepperweed), this protein is Large ribosomal subunit protein uL16c.